The chain runs to 99 residues: CLAVATA3/ESR (CLE)-related protein 11 (99 aa).

A signal peptide spans 1 to 31 (MTKQPKPCSFLFHISLLSALFVFLLISFAFT). A hydroxyproline mark is found at proline 91 and proline 94. Proline 94 is a glycosylation site (O-linked (Ara...) hydroxyproline).

The protein belongs to the CLV3/ESR signal peptide family. In terms of processing, the O-glycosylation (arabinosylation) of the hydroxyproline Pro-94 enhances binding affinity of the CLE11p peptide for its receptor. Mostly expressed in seedlings, roots and siliques, and, to a lower extent, in leaves, flowers, stems and apex.

It is found in the secreted. It localises to the extracellular space. Its function is as follows. Extracellular signal peptide that regulates cell fate. Represses root apical meristem maintenance. Regulates the transition of protophloem cells from proliferation to differentiation, thus impinging on postembryonic growth capacity of the root meristem; this signaling pathway requires CRN and CLV2. In Arabidopsis thaliana (Mouse-ear cress), this protein is CLAVATA3/ESR (CLE)-related protein 11.